A 1492-amino-acid polypeptide reads, in one-letter code: ATP-binding cassette sub-family C member 10 (1492 aa).

9 helical membrane-spanning segments follow: residues 32–52, 70–90, 102–122, 133–153, 172–192, 293–313, 320–340, 391–411, and 414–434; these read LVLS…YLGT, LAAS…VALP, VLAG…LWVL, PLAL…TVLW, LCLL…WAAP, LVGT…VGFL, LSHG…GAVL, LLNF…LAIT, and LLYQ…LLLV. One can recognise an ABC transmembrane type-1 1 domain in the interval 285 to 563; the sequence is YLALGLLKLV…FPWVINGLLE (279 aa). At Thr-463 the chain carries Phosphothreonine. Ser-467 carries the phosphoserine modification. Transmembrane regions (helical) follow at residues 507 to 527 and 538 to 558; these read VYLW…TYVL and FTAL…PWVI. The ABC transporter 1 domain occupies 598 to 824; the sequence is LELHGALFSW…VQAVPKAWAE (227 aa). Residue 633 to 640 coordinates ATP; it reads GKVGCGKS. The segment at 825–860 is disordered; sequence NGQESDSATAQSVQNPEKTKEGLEEEQSTSGRLLQE. Residues 826–840 are compositionally biased toward polar residues; it reads GQESDSATAQSVQNP. The next 6 helical transmembrane spans lie at 875-895, 933-953, 974-994, 1051-1071, 1153-1173, and 1182-1202; these read AYWK…LLLM, LFSP…VFPL, IAGV…AGTL, AGLL…LLLL, IRLQ…ALVQ, and GLVG…SGLV. Residues 885 to 1210 enclose the ABC transmembrane type-1 2 domain; it reads ALAILFSLLL…LVSSFTQTEA (326 aa). The ABC transporter 2 domain occupies 1246-1479; that stretch reads VEFQDVVLAY…PHSLFQQLLQ (234 aa). 1280-1287 contributes to the ATP binding site; the sequence is GRTGSGKS.

It belongs to the ABC transporter superfamily. ABCC family. Conjugate transporter (TC 3.A.1.208) subfamily. In testis, localized to peritubular myoid cells, Leydig cells, along the basal membrane of Sertoli cells, moderately in the adluminal compartment of the seminiferous tubules, and in vascular endothelial cells. As to expression, specifically expressed in spleen. In terms of tissue distribution, widely expressed.

The protein resides in the cell membrane. The protein localises to the basolateral cell membrane. It is found in the basal cell membrane. The enzyme catalyses ATP + H2O + xenobioticSide 1 = ADP + phosphate + xenobioticSide 2.. It carries out the reaction an S-substituted glutathione(in) + ATP + H2O = an S-substituted glutathione(out) + ADP + phosphate + H(+). The catalysed reaction is 17beta-estradiol 17-O-(beta-D-glucuronate)(in) + ATP + H2O = 17beta-estradiol 17-O-(beta-D-glucuronate)(out) + ADP + phosphate + H(+). It catalyses the reaction leukotriene C4(in) + ATP + H2O = leukotriene C4(out) + ADP + phosphate + H(+). In terms of biological role, ATP-dependent transporter of the ATP-binding cassette (ABC) family that actively extrudes physiological compounds, and xenobiotics from cells. Lipophilic anion transporter that mediates ATP-dependent transport of glucuronide conjugates such as estradiol-17-beta-o-glucuronide and GSH conjugates such as leukotriene C4 (LTC4). May contribute to regulate the transport of organic compounds in testes across the blood-testis-barrier. Mediates multidrug resistance (MDR) in cancer cells by preventing the intracellular accumulation of certain antitumor drugs, such as, docetaxel and paclitaxel. Does not transport glycocholic acid, taurocholic acid, MTX, folic acid, cAMP, or cGMP. This chain is ATP-binding cassette sub-family C member 10 (ABCC10), found in Homo sapiens (Human).